We begin with the raw amino-acid sequence, 109 residues long: Aquaporin-2 (109 aa).

Residues 1–6 (SIAFSR) are Cytoplasmic-facing. The helical transmembrane segment at 7-27 (AVLAEFLATLLFVFFGLGSAL) threads the bilayer. Residues 28–35 (NWPQAMPS) lie on the Extracellular side of the membrane. Residues 36 to 54 (VLQIAMAFGLAIGTLVQAL) traverse the membrane as a helical segment. Over 55-59 (GHVSG) the chain is Cytoplasmic. Residues 60–69 (AHINPAVTVA) constitute an intramembrane region (discontinuously helical). The NPA 1 motif lies at 63 to 65 (NPA). At 70–80 (CLVGCHVSFLR) the chain is on the cytoplasmic side. Residues 81–102 (AAFYVAAQLLGAVAGAALLHEI) traverse the membrane as a helical segment. The Extracellular portion of the chain corresponds to 103–109 (TPPDIRR).

It belongs to the MIP/aquaporin (TC 1.A.8) family. Homotetramer. Serine phosphorylation is necessary and sufficient for expression at the apical membrane. Endocytosis is not phosphorylation-dependent. In terms of processing, N-glycosylated.

The protein resides in the apical cell membrane. Its subcellular location is the basolateral cell membrane. It localises to the cell membrane. It is found in the cytoplasmic vesicle membrane. The protein localises to the golgi apparatus. The protein resides in the trans-Golgi network membrane. The catalysed reaction is H2O(in) = H2O(out). It carries out the reaction glycerol(in) = glycerol(out). Functionally, forms a water-specific channel that provides the plasma membranes of renal collecting duct with high permeability to water, thereby permitting water to move in the direction of an osmotic gradient. Plays an essential role in renal water homeostasis. Could also be permeable to glycerol. The polypeptide is Aquaporin-2 (Equus caballus (Horse)).